Reading from the N-terminus, the 242-residue chain is Uridylate kinase (242 aa).

11–14 (KLSG) contacts ATP. The involved in allosteric activation by GTP stretch occupies residues 19-24 (GDKGVG). Gly-53 is a binding site for UMP. ATP-binding residues include Gly-54 and Arg-58. Residues Asp-73 and 134–141 (IGSPYFST) each bind UMP. Positions 162, 168, and 171 each coordinate ATP.

It belongs to the UMP kinase family. Homohexamer.

The protein localises to the cytoplasm. It carries out the reaction UMP + ATP = UDP + ADP. It functions in the pathway pyrimidine metabolism; CTP biosynthesis via de novo pathway; UDP from UMP (UMPK route): step 1/1. With respect to regulation, allosterically activated by GTP. Inhibited by UTP. Functionally, catalyzes the reversible phosphorylation of UMP to UDP. This Streptococcus agalactiae serotype III (strain NEM316) protein is Uridylate kinase.